The following is a 397-amino-acid chain: MAKEKFTRNKPHVNVGTIGHIDHGKTTLTAAITKVASMKMGGKFVGYDEIDKAPEEKERGITIATAHVEYETPKRHYAHVDCPGHADYIKNMITGAAQMDGAIIVVAATDGPMPQTREHILLARQVGVPYLVVFMNKCDMVDDPELLELVELEIRELLSTYGYPGDDVPVIRGSALKALNSDSADSDDAKPILELLDACDSYIPDPQRDIDKPFLMPIEDVFSISGRGTVVTGRVERGVIKVGEEIEIVGIKPTIKTTCTGVEMFRKLLDQGEAGDNIGVLLRSVKRDEVERGQVLSALKSITPHRKFKAEVYVLSKEEGGRHTPFFSGYRPQFYCRTTDVTGVITLNEGVEMVMPGDNATFNVELIYPIAMEQGLRFAIREGGRTVGAGVVTEIVE.

Residues 10–207 enclose the tr-type G domain; the sequence is KPHVNVGTIG…ACDSYIPDPQ (198 aa). Residues 19 to 26 are G1; the sequence is GHIDHGKT. Residue 19-26 participates in GTP binding; the sequence is GHIDHGKT. Position 26 (threonine 26) interacts with Mg(2+). Positions 60 to 64 are G2; that stretch reads GITIA. The segment at 81–84 is G3; the sequence is DCPG. Residues 81-85 and 136-139 each bind GTP; these read DCPGH and NKCD. The segment at 136 to 139 is G4; sequence NKCD. Positions 174-176 are G5; sequence SAL.

It belongs to the TRAFAC class translation factor GTPase superfamily. Classic translation factor GTPase family. EF-Tu/EF-1A subfamily. Monomer.

The protein localises to the cytoplasm. The catalysed reaction is GTP + H2O = GDP + phosphate + H(+). GTP hydrolase that promotes the GTP-dependent binding of aminoacyl-tRNA to the A-site of ribosomes during protein biosynthesis. The protein is Elongation factor Tu of Lawsonia intracellularis (strain PHE/MN1-00).